A 360-amino-acid chain; its full sequence is Histidinol-phosphate aminotransferase (360 aa).

Lysine 223 bears the N6-(pyridoxal phosphate)lysine mark.

This sequence belongs to the class-II pyridoxal-phosphate-dependent aminotransferase family. Histidinol-phosphate aminotransferase subfamily. In terms of assembly, homodimer. The cofactor is pyridoxal 5'-phosphate.

It carries out the reaction L-histidinol phosphate + 2-oxoglutarate = 3-(imidazol-4-yl)-2-oxopropyl phosphate + L-glutamate. The protein operates within amino-acid biosynthesis; L-histidine biosynthesis; L-histidine from 5-phospho-alpha-D-ribose 1-diphosphate: step 7/9. The sequence is that of Histidinol-phosphate aminotransferase from Bacillus velezensis (strain DSM 23117 / BGSC 10A6 / LMG 26770 / FZB42) (Bacillus amyloliquefaciens subsp. plantarum).